Reading from the N-terminus, the 189-residue chain is Potassium-transporting ATPase KdpC subunit (189 aa).

Residues 10–30 (VIFAMLTLICGVIYPYAITGI) traverse the membrane as a helical segment.

It belongs to the KdpC family. The system is composed of three essential subunits: KdpA, KdpB and KdpC.

It is found in the cell inner membrane. Functionally, part of the high-affinity ATP-driven potassium transport (or Kdp) system, which catalyzes the hydrolysis of ATP coupled with the electrogenic transport of potassium into the cytoplasm. This subunit acts as a catalytic chaperone that increases the ATP-binding affinity of the ATP-hydrolyzing subunit KdpB by the formation of a transient KdpB/KdpC/ATP ternary complex. The polypeptide is Potassium-transporting ATPase KdpC subunit (Janthinobacterium sp. (strain Marseille) (Minibacterium massiliensis)).